The sequence spans 295 residues: Protoheme IX farnesyltransferase 2 (295 aa).

9 helical membrane passes run 9-29 (ITKP…FFLA), 36-56 (FALF…GCVF), 83-103 (LTLA…LLYV), 108-128 (LAAF…SLWL), 135-155 (GTLV…CAVS), 163-183 (VTLL…IAIF), 209-229 (IVLY…GGYA), 230-250 (GLGY…MAWG), and 264-284 (VFGF…VDSQ).

It belongs to the UbiA prenyltransferase family. Protoheme IX farnesyltransferase subfamily.

The protein resides in the cell inner membrane. It catalyses the reaction heme b + (2E,6E)-farnesyl diphosphate + H2O = Fe(II)-heme o + diphosphate. It participates in porphyrin-containing compound metabolism; heme O biosynthesis; heme O from protoheme: step 1/1. Its function is as follows. Converts heme B (protoheme IX) to heme O by substitution of the vinyl group on carbon 2 of heme B porphyrin ring with a hydroxyethyl farnesyl side group. The polypeptide is Protoheme IX farnesyltransferase 2 (Pseudomonas entomophila (strain L48)).